Reading from the N-terminus, the 76-residue chain is Conotoxin Cl6.4 (76 aa).

An N-terminal signal peptide occupies residues 1–19 (MTLTFLLVVALCMLTTCHT). Positions 20–47 (ENYRDSQKVSPVRSIGKTQFARSLRLSE) are excised as a propeptide. Intrachain disulfides connect Cys-50–Cys-66, Cys-57–Cys-70, and Cys-65–Cys-75.

In terms of tissue distribution, expressed by the venom duct.

It is found in the secreted. In Californiconus californicus (California cone), this protein is Conotoxin Cl6.4.